The following is a 410-amino-acid chain: Chitin deacetylase 3 (410 aa).

The N-terminal stretch at 1–18 (MYGHLSLSTLSLLAVVAA) is a signal peptide. Residues 19 to 39 (APFPESWLQPRDSDVSQLFRR) constitute a propeptide that is removed on maturation. 2 N-linked (GlcNAc...) asparagine glycosylation sites follow: asparagine 61 and asparagine 80. The NodB homology domain maps to 124–314 (KVWALSFDDG…KAVANGWSVK (191 aa)). Aspartate 131 (proton acceptor) is an active-site residue. Aspartate 131 is an acetate binding site. Aspartate 132 serves as a coordination point for Co(2+). Asparagine 149 carries N-linked (GlcNAc...) asparagine glycosylation. Positions 183 and 187 each coordinate Co(2+). Residue tyrosine 225 participates in acetate binding. The N-linked (GlcNAc...) asparagine glycan is linked to asparagine 279. Histidine 289 acts as the Proton donor in catalysis. N-linked (GlcNAc...) asparagine glycosylation is present at asparagine 293. Serine 385 carries GPI-anchor amidated serine lipidation. Residues 386–410 (SSWPIANRPSLFVIACGLALAAIMV) constitute a propeptide, removed in mature form.

The protein belongs to the polysaccharide deacetylase family. Co(2+) serves as cofactor.

It localises to the cell membrane. It catalyses the reaction [(1-&gt;4)-N-acetyl-beta-D-glucosaminyl](n) + n H2O = chitosan + n acetate. Hydrolyzes the N-acetamido groups of N-acetyl-D-glucosamine residues in chitin to form chitosan and acetate. Chitosan is required to anchor melanin to the cell wall, for maintenance of cell wall integrity, and for proper cytokinesis. Chitosan offers an advantage during infection as it is less readily detected than chitin by host immunosurveillance mechanisms. This Cryptococcus neoformans var. neoformans serotype D (strain JEC21 / ATCC MYA-565) (Filobasidiella neoformans) protein is Chitin deacetylase 3.